A 221-amino-acid chain; its full sequence is Serine/arginine-rich splicing factor 2 (221 aa).

Residues 14–92 (TSLKVDNLTY…RELRVQMARY (79 aa)) enclose the RRM domain. Residues 91–221 (RYGRPPDSHH…SPEEEGAVSS (131 aa)) are disordered. Basic residues-rich tracts occupy residues 117–171 (RRSR…RSKS) and 179–189 (SRSRSRSRSRS).

This sequence belongs to the splicing factor SR family. In terms of processing, extensively phosphorylated on serine residues in the RS domain.

The protein localises to the nucleus. Functionally, necessary for the splicing of pre-mRNA. It is required for formation of the earliest ATP-dependent splicing complex and interacts with spliceosomal components bound to both the 5'- and 3'-splice sites during spliceosome assembly. It also is required for ATP-dependent interactions of both U1 and U2 snRNPs with pre-mRNA. The sequence is that of Serine/arginine-rich splicing factor 2 (SRSF2) from Gallus gallus (Chicken).